A 50-amino-acid polypeptide reads, in one-letter code: Small ribosomal subunit protein uS14 (50 aa).

Zn(2+) contacts are provided by Cys15, Cys18, Cys33, and Cys36.

It belongs to the universal ribosomal protein uS14 family. Zinc-binding uS14 subfamily. Part of the 30S ribosomal subunit. It depends on Zn(2+) as a cofactor.

Its function is as follows. Binds 16S rRNA, required for the assembly of 30S particles. The sequence is that of Small ribosomal subunit protein uS14 from Methanococcoides burtonii (strain DSM 6242 / NBRC 107633 / OCM 468 / ACE-M).